The chain runs to 315 residues: Replication factor C small subunit (315 aa).

An ATP-binding site is contributed by 43 to 50; it reads GSPGVGKT.

It belongs to the activator 1 small subunits family. RfcS subfamily. As to quaternary structure, heteromultimer composed of small subunits (RfcS) and large subunits (RfcL).

Functionally, part of the RFC clamp loader complex which loads the PCNA sliding clamp onto DNA. The chain is Replication factor C small subunit from Methanococcus vannielii (strain ATCC 35089 / DSM 1224 / JCM 13029 / OCM 148 / SB).